A 608-amino-acid chain; its full sequence is Myosin light chain kinase 2, skeletal/cardiac muscle (608 aa).

The disordered stretch occupies residues M1–P160. N-acetylalanine is present on A2. 2 stretches are compositionally biased toward basic and acidic residues: residues A31–K43 and T50–A63. Over residues G82–G91 the composition is skewed to gly residues. The segment covering A116–P127 has biased composition (basic and acidic residues). S153, S159, and S161 each carry phosphoserine. The disordered stretch occupies residues Q214–S235. The 256-residue stretch at M297 to L552 folds into the Protein kinase domain. Residues L303–V311 and K326 each bind ATP. Residue D418 is the Proton acceptor of the active site. T457 carries the post-translational modification Phosphothreonine. A calmodulin-binding region spans residues I586 to S598.

It belongs to the protein kinase superfamily. CAMK Ser/Thr protein kinase family. As to quaternary structure, may interact with centrin.

It localises to the cytoplasm. It catalyses the reaction L-seryl-[myosin light chain] + ATP = O-phospho-L-seryl-[myosin light chain] + ADP + H(+). The enzyme catalyses L-threonyl-[myosin light chain] + ATP = O-phospho-L-threonyl-[myosin light chain] + ADP + H(+). Its function is as follows. Implicated in the level of global muscle contraction and cardiac function. Phosphorylates a specific serine in the N-terminus of a myosin light chain. This is Myosin light chain kinase 2, skeletal/cardiac muscle (MYLK2) from Oryctolagus cuniculus (Rabbit).